We begin with the raw amino-acid sequence, 335 residues long: Histidinol-phosphate aminotransferase (335 aa).

K202 carries the N6-(pyridoxal phosphate)lysine modification.

Belongs to the class-II pyridoxal-phosphate-dependent aminotransferase family. Histidinol-phosphate aminotransferase subfamily. As to quaternary structure, homodimer. Pyridoxal 5'-phosphate is required as a cofactor.

It carries out the reaction L-histidinol phosphate + 2-oxoglutarate = 3-(imidazol-4-yl)-2-oxopropyl phosphate + L-glutamate. The protein operates within amino-acid biosynthesis; L-histidine biosynthesis; L-histidine from 5-phospho-alpha-D-ribose 1-diphosphate: step 7/9. The sequence is that of Histidinol-phosphate aminotransferase from Thermotoga sp. (strain RQ2).